A 233-amino-acid polypeptide reads, in one-letter code: tRNA1(Val) (adenine(37)-N6)-methyltransferase (233 aa).

The protein belongs to the methyltransferase superfamily. tRNA (adenine-N(6)-)-methyltransferase family.

It localises to the cytoplasm. It carries out the reaction adenosine(37) in tRNA1(Val) + S-adenosyl-L-methionine = N(6)-methyladenosine(37) in tRNA1(Val) + S-adenosyl-L-homocysteine + H(+). In terms of biological role, specifically methylates the adenine in position 37 of tRNA(1)(Val) (anticodon cmo5UAC). In Shewanella amazonensis (strain ATCC BAA-1098 / SB2B), this protein is tRNA1(Val) (adenine(37)-N6)-methyltransferase.